We begin with the raw amino-acid sequence, 132 residues long: Small ribosomal subunit protein uS8 (132 aa).

This sequence belongs to the universal ribosomal protein uS8 family. In terms of assembly, part of the 30S ribosomal subunit. Contacts proteins S5 and S12.

One of the primary rRNA binding proteins, it binds directly to 16S rRNA central domain where it helps coordinate assembly of the platform of the 30S subunit. The polypeptide is Small ribosomal subunit protein uS8 (Lacticaseibacillus casei (strain BL23) (Lactobacillus casei)).